We begin with the raw amino-acid sequence, 298 residues long: Lipoyl synthase (298 aa).

Residues Cys-40, Cys-45, Cys-51, Cys-67, Cys-71, Cys-74, and Ser-280 each contribute to the [4Fe-4S] cluster site. Positions 53–269 (AVRKTATFMI…KEIALSKGFS (217 aa)) constitute a Radical SAM core domain.

It belongs to the radical SAM superfamily. Lipoyl synthase family. The cofactor is [4Fe-4S] cluster.

It is found in the cytoplasm. It catalyses the reaction [[Fe-S] cluster scaffold protein carrying a second [4Fe-4S](2+) cluster] + N(6)-octanoyl-L-lysyl-[protein] + 2 oxidized [2Fe-2S]-[ferredoxin] + 2 S-adenosyl-L-methionine + 4 H(+) = [[Fe-S] cluster scaffold protein] + N(6)-[(R)-dihydrolipoyl]-L-lysyl-[protein] + 4 Fe(3+) + 2 hydrogen sulfide + 2 5'-deoxyadenosine + 2 L-methionine + 2 reduced [2Fe-2S]-[ferredoxin]. It participates in protein modification; protein lipoylation via endogenous pathway; protein N(6)-(lipoyl)lysine from octanoyl-[acyl-carrier-protein]. Catalyzes the radical-mediated insertion of two sulfur atoms into the C-6 and C-8 positions of the octanoyl moiety bound to the lipoyl domains of lipoate-dependent enzymes, thereby converting the octanoylated domains into lipoylated derivatives. In Bacillus cereus (strain B4264), this protein is Lipoyl synthase.